The chain runs to 409 residues: tRNA(Met) cytidine acetate ligase (409 aa).

ATP-binding positions include 7–20 (VVEYNPMHNGHLYH), Gly102, Asn169, and Arg194.

This sequence belongs to the TmcAL family.

The protein localises to the cytoplasm. The catalysed reaction is cytidine(34) in elongator tRNA(Met) + acetate + ATP = N(4)-acetylcytidine(34) in elongator tRNA(Met) + AMP + diphosphate. In terms of biological role, catalyzes the formation of N(4)-acetylcytidine (ac(4)C) at the wobble position of elongator tRNA(Met), using acetate and ATP as substrates. First activates an acetate ion to form acetyladenylate (Ac-AMP) and then transfers the acetyl group to tRNA to form ac(4)C34. The chain is tRNA(Met) cytidine acetate ligase from Clostridium botulinum (strain Langeland / NCTC 10281 / Type F).